The chain runs to 438 residues: L-cysteine:1D-myo-inositol 2-amino-2-deoxy-alpha-D-glucopyranoside ligase (438 aa).

The disordered stretch occupies residues 1–27 (MDSWTSPDVPALPFTAEGPRVHDTARG). Residue Cys45 participates in Zn(2+) binding. L-cysteinyl-5'-AMP is bound by residues 45–48 (CGIT), Thr60, and 83–85 (NVT). The short motif at 47-57 (ITPYDATHLGH) is the 'HIGH' region element. The 'ERGGDP' region motif lies at 197-202 (DRGGDP). Residue Trp238 coordinates L-cysteinyl-5'-AMP. Zn(2+) is bound at residue Cys242. 260–262 (GDD) contributes to the L-cysteinyl-5'-AMP binding site. His267 is a binding site for Zn(2+). Val293 contacts L-cysteinyl-5'-AMP. The short motif at 299–303 (KMSKS) is the 'KMSKS' region element.

Belongs to the class-I aminoacyl-tRNA synthetase family. MshC subfamily. Monomer. Requires Zn(2+) as cofactor.

The catalysed reaction is 1D-myo-inositol 2-amino-2-deoxy-alpha-D-glucopyranoside + L-cysteine + ATP = 1D-myo-inositol 2-(L-cysteinylamino)-2-deoxy-alpha-D-glucopyranoside + AMP + diphosphate + H(+). Functionally, catalyzes the ATP-dependent condensation of GlcN-Ins and L-cysteine to form L-Cys-GlcN-Ins. The chain is L-cysteine:1D-myo-inositol 2-amino-2-deoxy-alpha-D-glucopyranoside ligase from Kytococcus sedentarius (strain ATCC 14392 / DSM 20547 / JCM 11482 / CCUG 33030 / NBRC 15357 / NCTC 11040 / CCM 314 / 541) (Micrococcus sedentarius).